We begin with the raw amino-acid sequence, 926 residues long: Lipoxygenase 4, chloroplastic (926 aa).

Residues 1–58 constitute a chloroplast transit peptide; sequence MALANEIMGSRLIFERSSSLASPFHSRFSIKKKTQRTQFSINPFDPRPMRAVNSSGVV. Residues 106–228 enclose the PLAT domain; that stretch reads FKETLVKHLD…DHPSKRILFT (123 aa). The Lipoxygenase domain maps to 231–926; sequence PYLPSETPSG…CRGVPNSVSI (696 aa). Residues His-585, His-590, His-777, Asn-781, and Ile-926 each contribute to the Fe cation site.

Belongs to the lipoxygenase family. Fe cation serves as cofactor. Expressed in leaves.

The protein resides in the plastid. The protein localises to the chloroplast. It carries out the reaction (9Z,12Z)-octadecadienoate + O2 = (13S)-hydroperoxy-(9Z,11E)-octadecadienoate. The catalysed reaction is (9Z,12Z,15Z)-octadecatrienoate + O2 = (13S)-hydroperoxy-(9Z,11E,15Z)-octadecatrienoate. Its pathway is lipid metabolism; oxylipin biosynthesis. In terms of biological role, plant lipoxygenases may be involved in a number of diverse aspects of plant physiology including growth and development, pest resistance, and senescence or responses to wounding. Catalyzes the hydroperoxidation of lipids containing a cis,cis-1,4-pentadiene structure. 13S-lipoxygenase that can use linolenic acid as substrates. The protein is Lipoxygenase 4, chloroplastic (LOX4) of Arabidopsis thaliana (Mouse-ear cress).